Here is a 476-residue protein sequence, read N- to C-terminus: MNFETVIGLEVHVELKTKSKIFSSSPNAFGAPPNTQTNVIDLGYPGVLPVLNRQAVEFAMKAAMALNCEIATETKFDRKNYFYPDNPKAYQISQYDQPLGKNGWIEIEVNGKKKKIGITRIHLEEDAGKLMHTGDGYSLVDFNRQGTPLIEIVSEPDIRSPEEAYAYLEKLKAIIQYTGVSDCKMEEGSLRCDANISLRPLGSDKFGTKTELKNLNSFNFVRMGLEYEAKRQEKILLSGGVIRQETRRFDEATKTTVLMRVKEGSEDYRYFPEPDLVMLYIDDEWKERVRASIPELPDARRKRYVEEWGLPEYDAKVLTLTKEMADFFEATVANGADPKLASNWLMVEVSGYLNSEQKELHDIALTPESLAGMIKLIQNGTISSKIAKKVFKELVEHGGDPEKIVKEKGLVQISDEGALRKIVLEVLDANPQSVEDYKNGKDRALGFLVGQVMKATKGQANPPLVNKLLVEEINKR.

This sequence belongs to the GatB/GatE family. GatB subfamily. In terms of assembly, heterotrimer of A, B and C subunits.

The catalysed reaction is L-glutamyl-tRNA(Gln) + L-glutamine + ATP + H2O = L-glutaminyl-tRNA(Gln) + L-glutamate + ADP + phosphate + H(+). The enzyme catalyses L-aspartyl-tRNA(Asn) + L-glutamine + ATP + H2O = L-asparaginyl-tRNA(Asn) + L-glutamate + ADP + phosphate + 2 H(+). In terms of biological role, allows the formation of correctly charged Asn-tRNA(Asn) or Gln-tRNA(Gln) through the transamidation of misacylated Asp-tRNA(Asn) or Glu-tRNA(Gln) in organisms which lack either or both of asparaginyl-tRNA or glutaminyl-tRNA synthetases. The reaction takes place in the presence of glutamine and ATP through an activated phospho-Asp-tRNA(Asn) or phospho-Glu-tRNA(Gln). This Geobacillus thermodenitrificans (strain NG80-2) protein is Aspartyl/glutamyl-tRNA(Asn/Gln) amidotransferase subunit B.